Consider the following 558-residue polypeptide: Membrane protein insertase YidC (558 aa).

Transmembrane regions (helical) follow at residues 3-23 (IKRT…FDNW), 364-384 (FVGN…AVFF), 438-458 (LPVV…LASV), 477-497 (PYFI…KLNP), and 508-528 (MMFM…GLVL).

Belongs to the OXA1/ALB3/YidC family. Type 1 subfamily. In terms of assembly, interacts with the Sec translocase complex via SecD. Specifically interacts with transmembrane segments of nascent integral membrane proteins during membrane integration.

The protein resides in the cell inner membrane. In terms of biological role, required for the insertion and/or proper folding and/or complex formation of integral membrane proteins into the membrane. Involved in integration of membrane proteins that insert both dependently and independently of the Sec translocase complex, as well as at least some lipoproteins. Aids folding of multispanning membrane proteins. The polypeptide is Membrane protein insertase YidC (Burkholderia pseudomallei (strain 668)).